A 393-amino-acid polypeptide reads, in one-letter code: Protein TsgA (393 aa).

A run of 12 helical transmembrane segments spans residues 11 to 31 (WISFLSYALTGALVIVTGMVM), 51 to 71 (FLNAGILISIFLNAWLMEIIP), 78 to 98 (FGFILMVLAVAGLMFSHSLAL), 101 to 121 (AAMFVLGLVSGITMSIGTFLI), 134 to 154 (LLFTDSFFSMAGMIFPMVAAF), 162 to 182 (WYWVYACIGLVYLAIFILTFG), 206 to 226 (IGVLFLAVAALCYILGQLGFI), 245 to 265 (ALVSDFWMSYMFGMWAFSFIL), 273 to 293 (ILTVLAGMAAVLMYLFITGTQ), 298 to 318 (WFILTLGFFSSAIYTSIITLG), 332 to 352 (FILTCGTIGTMLTFVVTGPIV), and 361 to 381 (LLTANGLYAVVFVMCFALGFV).

This sequence belongs to the major facilitator superfamily. TsgA family.

The protein resides in the cell inner membrane. The sequence is that of Protein TsgA from Salmonella agona (strain SL483).